Consider the following 409-residue polypeptide: ATPase ASNA1 homolog (409 aa).

21 to 28 (KGGVGKTT) serves as a coordination point for ATP. Residue Asp-62 is part of the active site. Glu-303 and Asn-330 together coordinate ATP. Cys-342 and Cys-345 together coordinate Zn(2+).

This sequence belongs to the arsA ATPase family. Homodimer.

It is found in the cytoplasm. It localises to the endoplasmic reticulum. ATPase required for the post-translational delivery of tail-anchored (TA) proteins to the endoplasmic reticulum. Recognizes and selectively binds the transmembrane domain of TA proteins in the cytosol. This complex then targets to the endoplasmic reticulum by membrane-bound receptors, where the tail-anchored protein is released for insertion. This process is regulated by ATP binding and hydrolysis. ATP binding drives the homodimer towards the closed dimer state, facilitating recognition of newly synthesized TA membrane proteins. ATP hydrolysis is required for insertion. Subsequently, the homodimer reverts towards the open dimer state, lowering its affinity for the membrane-bound receptor, and returning it to the cytosol to initiate a new round of targeting. In Leishmania infantum, this protein is ATPase ASNA1 homolog.